The chain runs to 1283 residues: Peroxisomal ATPase PEX1 (1283 aa).

The tract at residues 346–367 (SKTKQNVLSPEKEKQMSEPLDQ) is disordered. Residue serine 354 is modified to Phosphoserine. Residues 355-367 (PEKEKQMSEPLDQ) show a composition bias toward basic and acidic residues. Residues 599–606 (GGKGSGKS) and 881–888 (GPPGTGKT) each bind ATP. Phosphoserine is present on residues serine 1181, serine 1209, and serine 1211. Residues 1260–1283 (FQNPKRRKNQSGTMFRPGQKVTLA) form a disordered region.

It belongs to the AAA ATPase family. In terms of assembly, homooligomer; homooligomerizes in the cytosol, interaction with PEX6 promotes dissociation of the homooligomer. Interacts with PEX6; forming the PEX1-PEX6 AAA ATPase complex, which is composed of a heterohexamer formed by a trimer of PEX1-PEX6 dimers. Interacts indirectly with PEX26, via its interaction with PEX6.

It is found in the cytoplasm. It localises to the cytosol. The protein resides in the peroxisome membrane. The enzyme catalyses ATP + H2O = ADP + phosphate + H(+). Functionally, component of the PEX1-PEX6 AAA ATPase complex, a protein dislocase complex that mediates the ATP-dependent extraction of the PEX5 receptor from peroxisomal membranes, an essential step for PEX5 recycling. Specifically recognizes PEX5 monoubiquitinated at 'Cys-11', and pulls it out of the peroxisome lumen through the PEX2-PEX10-PEX12 retrotranslocation channel. Extraction by the PEX1-PEX6 AAA ATPase complex is accompanied by unfolding of the TPR repeats and release of bound cargo from PEX5. This chain is Peroxisomal ATPase PEX1, found in Homo sapiens (Human).